The chain runs to 384 residues: MGAGGRMQVSPSPKKSETDTLKRVPCETPPFTVGELKKAIPPHCFKRSIPRSFSYLIWDIIVASCFYYVATTYFPLLPHPLSYVAWPLYWACQGVVLTGVWVIAHECGHHAFSDYQWLDDTVGLIFHSFLLVPYFSWKYSHRRHHSNTGSLERDEVFVPKKKSDIKWYGKYLNNPLGRTVMLTVQFTLGWPLYWAFNVSGRPYPEGFACHFHPNAPIYNDRERLQIYVSDAGILAVCYGLYRYAAAQGVASMVCLYGVPLLIVNAFLVLITYLQHTHPSLPHYDSSEWDWLRGALATVDRDYGILNKVFHNITDTHVAHHLFSTMPHYHAMEVTKAIKPILGDYYQFDGTPWVKAMWREAKECIYVEPDRQGEKKGVFWYNNKL.

Positions 1–23 (MGAGGRMQVSPSPKKSETDTLKR) are disordered. Over residues 14–23 (KKSETDTLKR) the composition is skewed to basic and acidic residues. A run of 2 helical transmembrane segments spans residues 56 to 76 (LIWD…YFPL) and 84 to 104 (VAWP…WVIA). Residues 105–109 (HECGH) carry the Histidine box-1 motif. The chain crosses the membrane as a helical span at residues 117-137 (WLDDTVGLIFHSFLLVPYFSW). Residues 141 to 145 (HRRHH) carry the Histidine box-2 motif. The next 3 membrane-spanning stretches (helical) occupy residues 180 to 200 (VMLT…NVSG), 226 to 246 (IYVS…YAAA), and 253 to 273 (VCLY…ITYL). Positions 316 to 320 (HVAHH) match the Histidine box-3 motif.

It belongs to the fatty acid desaturase type 1 family.

Its subcellular location is the endoplasmic reticulum membrane. The protein operates within lipid metabolism; polyunsaturated fatty acid biosynthesis. Functionally, ER (microsomal) omega-6 fatty acid desaturase introduces the second double bond in the biosynthesis of 18:3 fatty acids, important constituents of plant membranes. It is thought to use cytochrome b5 as an electron donor and to act on fatty acids esterified to phosphatidylcholine and, possibly, other phospholipids. The protein is Omega-6 fatty acid desaturase, endoplasmic reticulum of Brassica juncea (Indian mustard).